Here is a 547-residue protein sequence, read N- to C-terminus: Cytochrome P450 monooxygenase oblB (547 aa).

2 helical membrane-spanning segments follow: residues Gly42 to Leu62 and Phe242 to Ile262. A glycan (N-linked (GlcNAc...) asparagine) is linked at Asn277. The chain crosses the membrane as a helical span at residues Val345–Ile365. Cys489 contributes to the heme binding site.

It belongs to the cytochrome P450 family. It depends on heme as a cofactor.

The protein resides in the membrane. The catalysed reaction is ophiobolin F + 4 reduced [NADPH--hemoprotein reductase] + 4 O2 = ophiobolin C + 4 oxidized [NADPH--hemoprotein reductase] + 6 H2O + 4 H(+). Its pathway is secondary metabolite biosynthesis; terpenoid biosynthesis. Functionally, cytochrome P450 monooxygenase; part of the gene cluster that mediates the biosynthesis of the sesterterpenes ophiobolins, fungal phytotoxins with potential anti-cancer activities. The first step of the pathway is performed by the sesterterpene synthase oblA that possesses both prenyl transferase and terpene cyclase activity, converting isopentenyl diphosphate and dimethylallyl diphosphate into geranylfarnesyl diphosphate (GFPP) and further converting GFPP into ophiobolin F, respectively. Other sesterterpenoids (C(25) terpenoids) are found as minor products of oblA. The cytochrome P450 monooxygenase oblB then catalyzes a four-step oxidative transformation of ophiobolin F to yield ophiobolin C. The function of the cytochrome P450 monooxygenase oblE has still to be determined. In Emericella variicolor (Aspergillus stellatus), this protein is Cytochrome P450 monooxygenase oblB.